Reading from the N-terminus, the 266-residue chain is Glutamate racemase (266 aa).

Residues 9–10 and 41–42 contribute to the substrate site; these read DS and YG. Cys72 functions as the Proton donor/acceptor in the catalytic mechanism. Position 73-74 (73-74) interacts with substrate; the sequence is NT. The Proton donor/acceptor role is filled by Cys184. Residue 185–186 participates in substrate binding; that stretch reads TH.

The protein belongs to the aspartate/glutamate racemases family.

The catalysed reaction is L-glutamate = D-glutamate. It functions in the pathway cell wall biogenesis; peptidoglycan biosynthesis. Its function is as follows. Provides the (R)-glutamate required for cell wall biosynthesis. The chain is Glutamate racemase from Staphylococcus haemolyticus.